Reading from the N-terminus, the 300-residue chain is Protein SPEAR2 (300 aa).

Residues 1 to 11 are compositionally biased toward polar residues; sequence MCSNNNTSSGS. Positions 1 to 64 are disordered; it reads MCSNNNTSSG…PPLSSSPSLP (64 aa). Basic residues predominate over residues 25–38; that stretch reads CRKKQKKDKVRRRG. Residues 37-45 carry the SPL motif; the sequence is RGPGVAELE. Residues 43 to 54 show a composition bias toward basic and acidic residues; it reads ELEKIRLQEEYK. Over residues 55–64 the composition is skewed to low complexity; that stretch reads PPLSSSPSLP. Positions 294 to 300 match the EAR motif; the sequence is IDLNLKL.

As to quaternary structure, homodimer and heterodimer with SPL and SPEARs. Interacts with SPL, SPEAR1, SPEAR3 and SPEAR4. In terms of tissue distribution, expressed in leaves.

Its function is as follows. Adapter-like transcriptional repressor recruiting TPL/TPR corepressors to inhibit TCP transcription factors. May be involved in leaf development. This chain is Protein SPEAR2, found in Arabidopsis thaliana (Mouse-ear cress).